Here is an 846-residue protein sequence, read N- to C-terminus: Envelope glycoprotein gp160 (846 aa).

The signal sequence occupies residues 1–31 (MRAREKERNCQNLWKWGIMLLGMLMTCSAAE). At 32–674 (DLWVTVYYGV…ITKWLWYIKL (643 aa)) the chain is on the extracellular side. The cysteines at positions 53 and 73 are disulfide-linked. Asn87, Asn129, Asn151, Asn179, Asn182, Asn229, Asn236, Asn257, Asn271, Asn284, and Asn290 each carry an N-linked (GlcNAc...) asparagine; by host glycan. Cystine bridges form between Cys118-Cys200, Cys125-Cys191, Cys130-Cys152, Cys213-Cys242, and Cys223-Cys234. The segment at 130–151 (CTDELRNSKGNGKVEEEEKRKN) is V1. The V2 stretch occupies residues 152-191 (CSFNVRDKREQVYALFYKLDIVPIDNNNRTNSTNYRLINC). Positions 291-327 (CTRPYKYTRQRTSIGLRQSLYTITGKKKKTGYIGQAH) are V3. Cys291 and Cys328 are joined by a disulfide. N-linked (GlcNAc...) asparagine; by host glycosylation occurs at Asn351. Residues 360-370 (SSGGDPEITSH) are CD4-binding loop. Intrachain disulfides connect Cys374-Cys435 and Cys381-Cys408. The V4 stretch occupies residues 381-408 (CNTSRLFNSTWNQTNSTGFNNGTVTLPC). 8 N-linked (GlcNAc...) asparagine; by host glycosylation sites follow: Asn382, Asn388, Asn392, Asn395, Asn401, Asn438, Asn451, and Asn452. V5 regions lie at residues 450-461 (ANNSSHETIRPG) and 453-461 (SSHETIRPG). The segment at 502–522 (AIGLGAVFLGFLGAAGSTMGA) is fusion peptide. Residues 564-582 (KQLQARVLAVERYLRDQQL) form an immunosuppression region. The cysteines at positions 588 and 594 are disulfide-linked. N-linked (GlcNAc...) asparagine; by host glycosylation is found at Asn601, Asn606, Asn615, and Asn627. The stretch at 623–657 (REIDNYTGLIYSLIEESQIQQEKNEKELLELDKWA) forms a coiled coil. Residues 652-673 (ELDKWASLWNWFSITKWLWYIK) are MPER; binding to GalCer. Residues 675–695 (FIMIVGGLIGLRIVFAVLSVV) traverse the membrane as a helical segment. Topologically, residues 696-846 (NRVRQGYSPL…IRQGLERLLL (151 aa)) are cytoplasmic. Positions 702 to 705 (YSPL) match the YXXL motif; contains endocytosis signal motif. S-palmitoyl cysteine; by host attachment occurs at residues Cys754 and Cys827. The short motif at 845-846 (LL) is the Di-leucine internalization motif element.

The protein belongs to the HIV-1 env protein family. As to quaternary structure, the mature envelope protein (Env) consists of a homotrimer of non-covalently associated gp120-gp41 heterodimers. The resulting complex protrudes from the virus surface as a spike. There seems to be as few as 10 spikes on the average virion. Interacts with host CD4, CCR5 and CXCR4. Gp120 also interacts with the C-type lectins CD209/DC-SIGN and CLEC4M/DC-SIGNR (collectively referred to as DC-SIGN(R)). Gp120 and gp41 interact with GalCer. Gp120 interacts with host ITGA4/ITGB7 complex; on CD4+ T-cells, this interaction results in rapid activation of integrin ITGAL/LFA-1, which facilitates efficient cell-to-cell spreading of HIV-1. Gp120 interacts with cell-associated heparan sulfate; this interaction increases virus infectivity on permissive cells and may be involved in infection of CD4- cells. The mature envelope protein (Env) consists of a homotrimer of non-covalently associated gp120-gp41 heterodimers. The resulting complex protrudes from the virus surface as a spike. There seems to be as few as 10 spikes on the average virion. Highly glycosylated by host. The high number of glycan on the protein is reffered to as 'glycan shield' because it contributes to hide protein sequence from adaptive immune system. Post-translationally, palmitoylation of the transmembrane protein and of Env polyprotein (prior to its proteolytic cleavage) is essential for their association with host cell membrane lipid rafts. Palmitoylation is therefore required for envelope trafficking to classical lipid rafts, but not for viral replication. In terms of processing, specific enzymatic cleavages in vivo yield mature proteins. Envelope glycoproteins are synthesized as an inactive precursor that is heavily N-glycosylated and processed likely by host cell furin in the Golgi to yield the mature SU and TM proteins. The cleavage site between SU and TM requires the minimal sequence [KR]-X-[KR]-R. About 2 of the 9 disulfide bonds of gp41 are reduced by P4HB/PDI, following binding to CD4 receptor.

It localises to the virion membrane. Its subcellular location is the host cell membrane. The protein localises to the host endosome membrane. Its function is as follows. Oligomerizes in the host endoplasmic reticulum into predominantly trimers. In a second time, gp160 transits in the host Golgi, where glycosylation is completed. The precursor is then proteolytically cleaved in the trans-Golgi and thereby activated by cellular furin or furin-like proteases to produce gp120 and gp41. Functionally, attaches the virus to the host lymphoid cell by binding to the primary receptor CD4. This interaction induces a structural rearrangement creating a high affinity binding site for a chemokine coreceptor like CXCR4 and/or CCR5. Acts as a ligand for CD209/DC-SIGN and CLEC4M/DC-SIGNR, which are respectively found on dendritic cells (DCs), and on endothelial cells of liver sinusoids and lymph node sinuses. These interactions allow capture of viral particles at mucosal surfaces by these cells and subsequent transmission to permissive cells. HIV subverts the migration properties of dendritic cells to gain access to CD4+ T-cells in lymph nodes. Virus transmission to permissive T-cells occurs either in trans (without DCs infection, through viral capture and transmission), or in cis (following DCs productive infection, through the usual CD4-gp120 interaction), thereby inducing a robust infection. In trans infection, bound virions remain infectious over days and it is proposed that they are not degraded, but protected in non-lysosomal acidic organelles within the DCs close to the cell membrane thus contributing to the viral infectious potential during DCs' migration from the periphery to the lymphoid tissues. On arrival at lymphoid tissues, intact virions recycle back to DCs' cell surface allowing virus transmission to CD4+ T-cells. In terms of biological role, acts as a class I viral fusion protein. Under the current model, the protein has at least 3 conformational states: pre-fusion native state, pre-hairpin intermediate state, and post-fusion hairpin state. During fusion of viral and target intracellular membranes, the coiled coil regions (heptad repeats) assume a trimer-of-hairpins structure, positioning the fusion peptide in close proximity to the C-terminal region of the ectodomain. The formation of this structure appears to drive apposition and subsequent fusion of viral and target cell membranes. Complete fusion occurs in host cell endosomes and is dynamin-dependent, however some lipid transfer might occur at the plasma membrane. The virus undergoes clathrin-dependent internalization long before endosomal fusion, thus minimizing the surface exposure of conserved viral epitopes during fusion and reducing the efficacy of inhibitors targeting these epitopes. Membranes fusion leads to delivery of the nucleocapsid into the cytoplasm. The polypeptide is Envelope glycoprotein gp160 (Human immunodeficiency virus type 1 group M subtype D (isolate NDK) (HIV-1)).